Reading from the N-terminus, the 318-residue chain is Acetyl-coenzyme A carboxylase carboxyl transferase subunit alpha (318 aa).

In terms of domain architecture, CoA carboxyltransferase C-terminal spans 39 to 292 (LSDKAERQLR…GAAIAETLPG (254 aa)).

This sequence belongs to the AccA family. As to quaternary structure, acetyl-CoA carboxylase is a heterohexamer composed of biotin carboxyl carrier protein (AccB), biotin carboxylase (AccC) and two subunits each of ACCase subunit alpha (AccA) and ACCase subunit beta (AccD).

It is found in the cytoplasm. The enzyme catalyses N(6)-carboxybiotinyl-L-lysyl-[protein] + acetyl-CoA = N(6)-biotinyl-L-lysyl-[protein] + malonyl-CoA. Its pathway is lipid metabolism; malonyl-CoA biosynthesis; malonyl-CoA from acetyl-CoA: step 1/1. In terms of biological role, component of the acetyl coenzyme A carboxylase (ACC) complex. First, biotin carboxylase catalyzes the carboxylation of biotin on its carrier protein (BCCP) and then the CO(2) group is transferred by the carboxyltransferase to acetyl-CoA to form malonyl-CoA. The sequence is that of Acetyl-coenzyme A carboxylase carboxyl transferase subunit alpha from Acidiphilium cryptum (strain JF-5).